We begin with the raw amino-acid sequence, 1024 residues long: Error-prone DNA polymerase (1024 aa).

This sequence belongs to the DNA polymerase type-C family. DnaE2 subfamily.

It localises to the cytoplasm. It catalyses the reaction DNA(n) + a 2'-deoxyribonucleoside 5'-triphosphate = DNA(n+1) + diphosphate. In terms of biological role, DNA polymerase involved in damage-induced mutagenesis and translesion synthesis (TLS). It is not the major replicative DNA polymerase. This is Error-prone DNA polymerase from Pseudomonas paraeruginosa (strain DSM 24068 / PA7) (Pseudomonas aeruginosa (strain PA7)).